The following is a 423-amino-acid chain: F-box/LRR-repeat protein 2 (423 aa).

The 47-residue stretch at 9–55 folds into the F-box domain; the sequence is GLINKKLPKELLLRIFSFLDIVTLCRCAQISKAWNILALDGSNWQRI. 13 LRR repeats span residues 61-87, 88-113, 114-139, 140-165, 166-191, 192-217, 218-243, 244-269, 270-295, 296-321, 322-350, 351-375, and 376-401; these read QTDVEGRVVENISKRCGGFLRKLSLRG, CIGVGDSSLKTFAQNCRNIEHLNLNG, CTKITDSTCYSLSRFCSKLKHLDLTS, CVSITNSSLKGISEGCRNLEYLNLSW, CDQITKDGIEALVRGCRGLKALLLRG, CTQLEDEALKHIQNYCHELVSLNLQS, CSRITDEGVVQICRGCHRLQALCLSG, CSNLTDASLTALGLNCPRLQILEAAR, CSHLTDAGFTLLARNCHELEKMDLEE, CILITDSTLIQLSIHCPKLQALSLSH, CELITDDGILHLSNSTCGHERLRVLELDN, CLLITDVALEHLENCRGLERLELYD, and CQQVTRAGIKRMRAQLPHVKVHAYFA. Residues 80–90 are interaction with Calmodulin; that stretch reads LRKLSLRGCIG. Lysine 201 is covalently cross-linked (Glycyl lysine isopeptide (Lys-Gly) (interchain with G-Cter in ubiquitin)). Residue threonine 404 is modified to Phosphothreonine. The S-geranylgeranyl cysteine moiety is linked to residue cysteine 420. The short motif at 420 to 423 is the CAAX motif element; sequence CVIL.

Part of the SCF (SKP1-CUL1-F-box) E3 ubiquitin-protein ligase complex SCF(FBXL2) composed of CUL1, SKP1, RBX1 and FBXL2. Interacts with calmodulin; may antagonize substrate ubiquitination by SCF(FBXL2). May interact with PIK3R1. Interacts with PTPN13. As to quaternary structure, (Microbial infection) Interacts with hepatitis C virus non-structural protein 5A (NS5A) and less efficiently, with hepatitis C virus non-structural protein 5B (NS5B); a reaction crucial for hepatitis C virus RNA replication. Post-translationally, phosphorylated by GSK-beta (GSK3B), promoting recognition by FBXO3, leading to its ubiquitination by the SCF(FBXO3) complex. In terms of processing, ubiquitinated at Lys-201 by the SCF(FBXO3) complex in response to lipopolysaccharide (LPS), leading to its degradation by the proteasome. As to expression, expressed in brain, heart, kidney, liver, lung, pancreas and placenta.

It localises to the membrane. It functions in the pathway protein modification; protein ubiquitination. Its function is as follows. Calcium-activated substrate recognition component of the SCF (SKP1-cullin-F-box protein) E3 ubiquitin-protein ligase complex, SCF(FBXL2), which mediates the ubiquitination and subsequent proteasomal degradation of target proteins. Unlike many F-box proteins, FBXL2 does not seem to target phosphodegron within its substrates but rather calmodulin-binding motifs and is thereby antagonized by calmodulin. This is the case for the cyclins CCND2 and CCND3 which polyubiquitination and subsequent degradation are inhibited by calmodulin. Through CCND2 and CCND3 degradation induces cell-cycle arrest in G(0). SCF(FBXL2) also mediates PIK3R2 ubiquitination and proteasomal degradation thereby regulating phosphatidylinositol 3-kinase signaling and autophagy. PCYT1A monoubiquitination by SCF(FBXL2) and subsequent degradation regulates synthesis of phosphatidylcholine, which is utilized for formation of membranes and of pulmonary surfactant. The SCF(FBXL2) complex acts as a regulator of inflammation by mediating ubiquitination and degradation of TRAF proteins (TRAF1, TRAF2, TRAF3, TRAF4, TRAF5 and TRAF6). The SCF(FBXL2) complex acts as a negative regulator of the NLRP3 inflammasome by mediating ubiquitination and degradation of NLRP3. This Homo sapiens (Human) protein is F-box/LRR-repeat protein 2.